We begin with the raw amino-acid sequence, 620 residues long: MALLQIAEPGQSTVPHEHRLAAGIDLGTTNSLIASVQSGNASTLSDDQGRDILPSIVSYQAGNVLVGQTAQALSIEDAQNTITSAKRLIGRSLKDIQSKYPSLPYEFCGDENHPEIMTRQGAVNPVQVSAEILKSLNLRAQAALGGELTGVVITVPAHFDDAQRQSTKDAAKLAGVSVLRLLNEPTAAAVAYGLDSGQEGVIAVYDLGGGTFDISILRLNKGVFEVLATGGDSALGGDDFDVVLVDYLVEQAGLVRPLSPSLERQLMQQACFAKEQLTTKEEVDITISLDSDSDWKTSLTKAQLNKLISSLVNKTLRACRRTLKDADITIDEVIEVVMVGGSTRVPLVRSEVEKHFNKTPLTSIDPDKVVAIGAAIQADVLVGNKPDSDMLLLDVTPLSLGLETMGGLVEKVIPRNTTIPVAKAQEFTTFKDGQTAMAVHVLQGERELVEDCRSLARFELRGIPAMTAGAAHIRVTFKVDADGLLSVSAMEKSSGVESSIEVKPSFGLDDNQISQMIKDSMSNAADDMQARMLKEQQVEASRVIESVQAALLADSKLLNSDEITVIENAIKSLAQVSQGQEIKAIENALDKLNDSTAIFAERRMDSSISEALAGQAVDKI.

The protein belongs to the heat shock protein 70 family.

In terms of biological role, chaperone involved in the maturation of iron-sulfur cluster-containing proteins. Has a low intrinsic ATPase activity which is markedly stimulated by HscB. In Colwellia psychrerythraea (strain 34H / ATCC BAA-681) (Vibrio psychroerythus), this protein is Chaperone protein HscA homolog.